The primary structure comprises 273 residues: HMP-PP phosphatase (273 aa).

The Nucleophile role is filled by Asp-8. Mg(2+)-binding residues include Asp-8, Asp-10, and Asp-212.

It belongs to the HAD-like hydrolase superfamily. Cof family. It depends on Mg(2+) as a cofactor.

It catalyses the reaction 4-amino-2-methyl-5-(diphosphooxymethyl)pyrimidine + H2O = 4-amino-2-methyl-5-(phosphooxymethyl)pyrimidine + phosphate + H(+). In terms of biological role, catalyzes the hydrolysis of 4-amino-2-methyl-5-hydroxymethylpyrimidine pyrophosphate (HMP-PP) to 4-amino-2-methyl-5-hydroxymethylpyrimidine phosphate (HMP-P). This chain is HMP-PP phosphatase, found in Yersinia pestis bv. Antiqua (strain Antiqua).